We begin with the raw amino-acid sequence, 383 residues long: 4-hydroxy-3-methylbut-2-en-1-yl diphosphate synthase (flavodoxin) (383 aa).

[4Fe-4S] cluster contacts are provided by Cys275, Cys278, Cys310, and Glu317.

The protein belongs to the IspG family. The cofactor is [4Fe-4S] cluster.

It carries out the reaction (2E)-4-hydroxy-3-methylbut-2-enyl diphosphate + oxidized [flavodoxin] + H2O + 2 H(+) = 2-C-methyl-D-erythritol 2,4-cyclic diphosphate + reduced [flavodoxin]. It participates in isoprenoid biosynthesis; isopentenyl diphosphate biosynthesis via DXP pathway; isopentenyl diphosphate from 1-deoxy-D-xylulose 5-phosphate: step 5/6. Its function is as follows. Converts 2C-methyl-D-erythritol 2,4-cyclodiphosphate (ME-2,4cPP) into 1-hydroxy-2-methyl-2-(E)-butenyl 4-diphosphate. The chain is 4-hydroxy-3-methylbut-2-en-1-yl diphosphate synthase (flavodoxin) from Dinoroseobacter shibae (strain DSM 16493 / NCIMB 14021 / DFL 12).